A 118-amino-acid polypeptide reads, in one-letter code: Large ribosomal subunit protein uL18 (118 aa).

This sequence belongs to the universal ribosomal protein uL18 family. In terms of assembly, part of the 50S ribosomal subunit; part of the 5S rRNA/L5/L18/L25 subcomplex. Contacts the 5S and 23S rRNAs.

Functionally, this is one of the proteins that bind and probably mediate the attachment of the 5S RNA into the large ribosomal subunit, where it forms part of the central protuberance. This chain is Large ribosomal subunit protein uL18, found in Wolinella succinogenes (strain ATCC 29543 / DSM 1740 / CCUG 13145 / JCM 31913 / LMG 7466 / NCTC 11488 / FDC 602W) (Vibrio succinogenes).